The sequence spans 1703 residues: MAKSKLPRSTPAARAAAVPPPRLAAAAQQQHHQQQPPSTPPAPVPPTKPSVAGASTPPRSASPVSNHDTDSVALSSAKKKKKKSKSKAKDADFIDDQEYELQQAAALAQRPRSPASLAARAQAQAQLLAAASELYRRIEGDAQGIPDDDAYWTSLPAHLRTFIRNALPLGQFPPAAQAALNENANDPANRHASTQAMIAVAQQLAQAAHASQRHIQQYPPGTHPYPPLPFDASIFADLALHPDQPLPLHPHPNTANNAHPTNVNGAYGQYSSSPNPPPTQPPVEPLPPPVVLYDNFDDEIDRFDDDGVDDAHYYDDAELDEDDEVLEADAGLLRARNRVWMQEGANHALRPNGLATHPDGMRSASKNKKKKKKKKGGAGAAAGHGDDEAHEIELEVPPPKPVPNHPPPSTNVSSVARNSNPPPPSSRAAGKQPMTFNSTGKTPARPANGLPPSSNSGKRSVSSSTHGHPPAANASANNAKIWSTSSAEERERIKEFWLGLSMKDRQKLVQVEKETVLRKMKEQQKFLCSCAVCGRKRSAIEEELEVLYDAYYDELEEYANHQQRWVSSGGTIPPPPGPGPFPGSVALDASGAVIGGDPLSRTRAAHAGRDTRHTHTHTHAHTHTHTHTHTHTHTHAHQHPHPHPHGRKASLHPESSDGYDDDELDDDAEYDDDDDDADYDDEDEDDDVELEKERAREDYDKRNPVPSARRRGTNDSNDLFGLGSSLTVKGGILTVADDMLKNDGRKFLEMMEQLAERRMHREELTNAELAASDDEDDVDGPDDVDDEDLDEEDEDEEDEILTEEQRMEEGRKMFQIFAARMFEQRVLAAYRERVAQERQLQLLRELEEEDDNEKAREARRMKESQKKKDKKKAQREAKEAERLKKDQERAAAEAEVRAQQQAQRDAELKKQEEIRLKKEAERKAREDEKAKKDEERRRRQAEERERQLEVERKRREKEEKIRLERELQEKAKRDREEAQRKAKEEQQRVQRAKELKAKEEQERKAEAAQKEKEARAQAQREAKQAAAAASRGASAAQGVPSSPSTGPKAGSNKAANASTPGTPARGGKNGSVTGPPTVGLGQDQVQPRGVHSQRSAASSKHAPGTGGPNAAGGLAAAVAASSVAPAGSSSNAVGSTLPAPPQGLPPRPSTAVLTPAGSSSQTSSVSVAANAGLPRPPTNLAGGGSSSAVPPSLGFGSIALNAQSNVPMPSAKTPGSSISPKPAQSFVQPQEKQPSPPGFGAAQSPMGAVYGQHAGLDSLRSPTLSNGLQNSGMFGSNGSMSSSLQSPSLGAPGMGGMTNSLASLNLNAAPLSSPALNVGNPLISSKTPGLGMESSTPTGHNLGHMHSPTQTPFSPMSGSGSVDPMRSRTASFADSDPMSFAGIRPGSSLSQRVPTYRSGAPTPIGPIGRPKAMDAIQQHMHDEHTGAIGNGRSSSTTSGSGATSPRLPEGILGSSALGGDDDIIDPKPRRVSHTIPIGGGATGSSMGSAGSFFGGGMGGGSAVGGGFGVGSSSPWSSFSGNNPTAPGPLSPAFNGGGAAPGSIGSGLATGNFGLNQNASTPGAGSSGSGMAGGAASDPWARMSTNSWDRARFAFEQPGGNGVGAGSNGGTPSGLGGIGGSHHAHAPGSHMGHLHHQLGLSAGPGNGNGSGSGGMLGSFALGAPGSGTRNLFGAPGSNALHPGAIGSALSPTLPGARHVSGSHE.

Disordered stretches follow at residues 1-91, 243-288, 347-484, 566-724, 759-807, 843-1292, 1353-1407, 1424-1465, 1516-1537, 1558-1581, 1595-1637, and 1672-1703; these read MAKS…AKDA, DQPL…PLPP, HALR…IWST, VSSG…GLGS, MHRE…EQRM, LREL…LGAP, FSPM…IGPI, HTGA…DIID, SSFSGNNPTAPGPLSPAFNGGG, ASTPGAGSSGSGMAGGAASDPWAR, EQPG…HHQL, and GAPGSNALHPGAIGSALSPTLPGARHVSGSHE. Positions 7–36 are enriched in low complexity; the sequence is PRSTPAARAAAVPPPRLAAAAQQQHHQQQP. Residues 37-48 are compositionally biased toward pro residues; the sequence is PSTPPAPVPPTK. Residues 57–66 are compositionally biased toward polar residues; the sequence is PPRSASPVSN. Basic residues predominate over residues 77–86; the sequence is AKKKKKKSKS. Residues 253-273 show a composition bias toward polar residues; the sequence is NTANNAHPTNVNGAYGQYSSS. Residues 274 to 288 show a composition bias toward pro residues; that stretch reads PNPPPTQPPVEPLPP. The segment covering 365 to 376 has biased composition (basic residues); it reads SKNKKKKKKKKG. Residues 384-393 show a composition bias toward basic and acidic residues; that stretch reads HGDDEAHEIE. Residues 396 to 409 show a composition bias toward pro residues; that stretch reads VPPPKPVPNHPPPS. 2 stretches are compositionally biased toward low complexity: residues 410–419 and 453–464; these read TNVSSVARNS and SSNSGKRSVSSS. The span at 572–581 shows a compositional bias: pro residues; the sequence is IPPPPGPGPF. The segment covering 614 to 650 has biased composition (basic residues); the sequence is THTHTHAHTHTHTHTHTHTHTHAHQHPHPHPHGRKAS. Residues 657-690 are compositionally biased toward acidic residues; the sequence is DGYDDDELDDDAEYDDDDDDADYDDEDEDDDVEL. Basic and acidic residues predominate over residues 691 to 703; that stretch reads EKERAREDYDKRN. A coiled-coil region spans residues 748-1031; sequence LEMMEQLAER…AKQAAAAASR (284 aa). The segment covering 771–802 has biased composition (acidic residues); it reads ASDDEDDVDGPDDVDDEDLDEEDEDEEDEILT. Composition is skewed to basic and acidic residues over residues 853-866, 874-896, and 904-1023; these read EKAREARRMKESQK, QREAKEAERLKKDQERAAAEAEV, and RDAE…REAK. 2 stretches are compositionally biased toward low complexity: residues 1024–1037 and 1111–1135; these read QAAAAASRGASAAQ and AGGLAAAVAASSVAPAGSSSNAVGS. Pro residues predominate over residues 1138–1148; sequence PAPPQGLPPRP. Over residues 1158-1167 the composition is skewed to low complexity; it reads SSSQTSSVSV. Positions 1200–1219 are enriched in polar residues; that stretch reads LNAQSNVPMPSAKTPGSSIS. Over residues 1269 to 1291 the composition is skewed to low complexity; that stretch reads QNSGMFGSNGSMSSSLQSPSLGA. A compositionally biased stretch (low complexity) spans 1431–1444; the sequence is GRSSSTTSGSGATS. Residues 1598 to 1619 show a composition bias toward gly residues; that stretch reads GGNGVGAGSNGGTPSGLGGIGG.

Belongs to the NST1 family.

Its subcellular location is the cytoplasm. In terms of biological role, may act as a negative regulator of salt tolerance. This Mycosarcoma maydis (Corn smut fungus) protein is Stress response protein NST1 (NST1).